The primary structure comprises 306 residues: Porphobilinogen deaminase (306 aa).

Cysteine 244 carries the post-translational modification S-(dipyrrolylmethanemethyl)cysteine.

It belongs to the HMBS family. As to quaternary structure, monomer. Requires dipyrromethane as cofactor.

The enzyme catalyses 4 porphobilinogen + H2O = hydroxymethylbilane + 4 NH4(+). It functions in the pathway porphyrin-containing compound metabolism; protoporphyrin-IX biosynthesis; coproporphyrinogen-III from 5-aminolevulinate: step 2/4. In terms of biological role, tetrapolymerization of the monopyrrole PBG into the hydroxymethylbilane pre-uroporphyrinogen in several discrete steps. This chain is Porphobilinogen deaminase, found in Streptococcus sanguinis (strain SK36).